The chain runs to 242 residues: Glucosamine-6-phosphate deaminase (242 aa).

The active-site Proton acceptor; for enolization step is the D71. Catalysis depends on N142, which acts as the For ring-opening step. H144 functions as the Proton acceptor; for ring-opening step in the catalytic mechanism. Catalysis depends on E149, which acts as the For ring-opening step.

Belongs to the glucosamine/galactosamine-6-phosphate isomerase family. NagB subfamily.

The enzyme catalyses alpha-D-glucosamine 6-phosphate + H2O = beta-D-fructose 6-phosphate + NH4(+). It functions in the pathway amino-sugar metabolism; N-acetylneuraminate degradation; D-fructose 6-phosphate from N-acetylneuraminate: step 5/5. In terms of biological role, catalyzes the reversible isomerization-deamination of glucosamine 6-phosphate (GlcN6P) to form fructose 6-phosphate (Fru6P) and ammonium ion. This Malacoplasma penetrans (strain HF-2) (Mycoplasma penetrans) protein is Glucosamine-6-phosphate deaminase.